We begin with the raw amino-acid sequence, 188 residues long: Zinc finger protein 428 (188 aa).

Residues M1 to H162 form a disordered region. Positions P40–Y61 are enriched in acidic residues. The segment covering R84–Q94 has biased composition (low complexity). T108 is modified (phosphothreonine). The span at P116 to R129 shows a compositional bias: low complexity. Basic and acidic residues predominate over residues P138–R149. The C2H2-type zinc-finger motif lies at Y161–H183.

In Homo sapiens (Human), this protein is Zinc finger protein 428 (ZNF428).